A 270-amino-acid chain; its full sequence is Protein US2 homolog (270 aa).

This sequence belongs to the herpesviridae US2 family.

In Gallid herpesvirus 2 (strain Chicken/Md5/ATCC VR-987) (GaHV-2), this protein is Protein US2 homolog (MDV091).